Here is a 688-residue protein sequence, read N- to C-terminus: G protein-coupled receptor kinase 3 (688 aa).

An N-terminal region spans residues Met1–Asp190. Residues Thr54–Cys175 enclose the RGS domain. One can recognise a Protein kinase domain in the interval Phe191–Phe453. ATP is bound by residues Ile197–Val205 and Lys220. Asp317 serves as the catalytic Proton acceptor. Residues Arg454 to Val521 enclose the AGC-kinase C-terminal domain. The 95-residue stretch at Asp558–Met652 folds into the PH domain.

This sequence belongs to the protein kinase superfamily. AGC Ser/Thr protein kinase family. GPRK subfamily. In terms of assembly, interacts with GIT1. In terms of processing, ubiquitinated. In terms of tissue distribution, ubiquitous; brain, spleen &gt; heart, lung &gt; kidney.

It is found in the postsynapse. It localises to the presynapse. The enzyme catalyses [beta-adrenergic receptor] + ATP = [beta-adrenergic receptor]-phosphate + ADP + H(+). Its function is as follows. Specifically phosphorylates the agonist-occupied form of the beta-adrenergic and closely related receptors. This is G protein-coupled receptor kinase 3 from Bos taurus (Bovine).